The sequence spans 601 residues: Elongation factor 4 (601 aa).

Residues 7 to 189 (DNIRNFSIVA…AIVKRLPPPK (183 aa)) form the tr-type G domain. Residues 19–24 (DHGKST) and 136–139 (NKVD) contribute to the GTP site.

This sequence belongs to the TRAFAC class translation factor GTPase superfamily. Classic translation factor GTPase family. LepA subfamily.

The protein localises to the cell inner membrane. It catalyses the reaction GTP + H2O = GDP + phosphate + H(+). In terms of biological role, required for accurate and efficient protein synthesis under certain stress conditions. May act as a fidelity factor of the translation reaction, by catalyzing a one-codon backward translocation of tRNAs on improperly translocated ribosomes. Back-translocation proceeds from a post-translocation (POST) complex to a pre-translocation (PRE) complex, thus giving elongation factor G a second chance to translocate the tRNAs correctly. Binds to ribosomes in a GTP-dependent manner. This chain is Elongation factor 4, found in Methylorubrum populi (strain ATCC BAA-705 / NCIMB 13946 / BJ001) (Methylobacterium populi).